Here is a 143-residue protein sequence, read N- to C-terminus: Histone H2AX (143 aa).

The interval 1–22 (MSGRGKTGGKARAKAKSRSSRA) is disordered. Serine 2 is subject to N-acetylserine. Residue serine 2 is modified to Phosphoserine. N6-acetyllysine occurs at positions 6 and 10. Positions 7–19 (TGGKARAKAKSRS) are enriched in basic residues. Residue lysine 10 is modified to N6-lactoyllysine; alternate. Residues lysine 14 and lysine 16 each participate in a glycyl lysine isopeptide (Lys-Gly) (interchain with G-Cter in ubiquitin) cross-link. The residue at position 37 (lysine 37) is an N6-acetyllysine. A Glycyl lysine isopeptide (Lys-Gly) (interchain with G-Cter in ubiquitin) cross-link involves residue lysine 120. Residues 121–143 (TSATVGPKAPSGGKKATQASQEY) are disordered. Serine 122 bears the Phosphoserine mark. Residues lysine 128 and lysine 135 each participate in a glycyl lysine isopeptide (Lys-Gly) (interchain with G-Cter in SUMO2) cross-link. At serine 140 the chain carries Phosphoserine; by ATM, ATR and PRKDC. The [ST]-Q motif motif lies at 140-141 (SQ). Tyrosine 143 is subject to Phosphotyrosine; by WSTF.

This sequence belongs to the histone H2A family. In terms of assembly, the nucleosome is a histone octamer containing two molecules each of H2A, H2B, H3 and H4 assembled in one H3-H4 heterotetramer and two H2A-H2B heterodimers. The octamer wraps approximately 147 bp of DNA. Interacts with numerous proteins required for DNA damage signaling and repair when phosphorylated on Ser-140. These include MDC1, TP53BP1, BRCA1 and the MRN complex, composed of MRE11, RAD50, and NBN. Interaction with the MRN complex is mediated at least in part by NBN. Also interacts with DHX9/NDHII when phosphorylated on Ser-140 and MCPH1 when phosphorylated at Ser-140 or Tyr-143. Interacts with ARRB2; the interaction is detected in the nucleus upon OR1D2 stimulation. Interacts with WRAP53/TCAB1. Interacts with HDGFL2. Interacts with DNA damage up-regulated protein DDUP. Forms a complex with DDUP and RAD18 following DDUP phosphorylation. (Microbial infection) Interacts with Epstein-Barr virus protein EBNA6. Post-translationally, phosphorylated by VRK1. Phosphorylated on Ser-140 (to form gamma-H2AX or H2AX139ph) in response to DNA double strand breaks (DSBs) generated by exogenous genotoxic agents and by stalled replication forks, and may also occur during meiotic recombination events and immunoglobulin class switching in lymphocytes. Phosphorylation can extend up to several thousand nucleosomes from the actual site of the DSB and may mark the surrounding chromatin for recruitment of proteins required for DNA damage signaling and repair. Widespread phosphorylation may also serve to amplify the damage signal or aid repair of persistent lesions. Phosphorylation of Ser-140 (H2AX139ph) in response to ionizing radiation is mediated by both ATM and PRKDC while defects in DNA replication induce Ser-140 phosphorylation (H2AX139ph) subsequent to activation of ATR and PRKDC. Dephosphorylation of Ser-140 by PP2A is required for DNA DSB repair. In meiosis, Ser-140 phosphorylation (H2AX139ph) may occur at synaptonemal complexes during leptotene as an ATM-dependent response to the formation of programmed DSBs by SPO11. Ser-140 phosphorylation (H2AX139ph) may subsequently occurs at unsynapsed regions of both autosomes and the XY bivalent during zygotene, downstream of ATR and BRCA1 activation. Ser-140 phosphorylation (H2AX139ph) may also be required for transcriptional repression of unsynapsed chromatin and meiotic sex chromosome inactivation (MSCI), whereby the X and Y chromosomes condense in pachytene to form the heterochromatic XY-body. During immunoglobulin class switch recombination in lymphocytes, Ser-140 phosphorylation (H2AX139ph) may occur at sites of DNA-recombination subsequent to activation of the activation-induced cytidine deaminase AICDA. Phosphorylation at Tyr-143 (H2AXY142ph) by BAZ1B/WSTF determines the relative recruitment of either DNA repair or pro-apoptotic factors. Phosphorylation at Tyr-143 (H2AXY142ph) favors the recruitment of APBB1/FE65 and pro-apoptosis factors such as MAPK8/JNK1, triggering apoptosis. In contrast, dephosphorylation of Tyr-143 by EYA proteins (EYA1, EYA2, EYA3 or EYA4) favors the recruitment of MDC1-containing DNA repair complexes to the tail of phosphorylated Ser-140 (H2AX139ph). In terms of processing, monoubiquitination of Lys-120 (H2AXK119ub) by RING1 and RNF2/RING2 complex gives a specific tag for epigenetic transcriptional repression. Following DNA double-strand breaks (DSBs), it is ubiquitinated through 'Lys-63' linkage of ubiquitin moieties by the E2 ligase UBE2N and the E3 ligases RNF8 and RNF168, leading to the recruitment of repair proteins to sites of DNA damage. Ubiquitination at Lys-14 and Lys-16 (H2AK13Ub and H2AK15Ub, respectively) in response to DNA damage is initiated by RNF168 that mediates monoubiquitination at these 2 sites, and 'Lys-63'-linked ubiquitin are then conjugated to monoubiquitin; RNF8 is able to extend 'Lys-63'-linked ubiquitin chains in vitro. H2AK119Ub and ionizing radiation-induced 'Lys-63'-linked ubiquitination (H2AK13Ub and H2AK15Ub) are distinct events. Acetylation at Lys-6 (H2AXK5ac) by KAT5 component of the NuA4 histone acetyltransferase complex promotes NBN/NBS1 assembly at the sites of DNA damage. Acetylation at Lys-37 increases in S and G2 phases. This modification has been proposed to play a role in DNA double-strand break repair.

It localises to the nucleus. The protein localises to the chromosome. Functionally, variant histone H2A which replaces conventional H2A in a subset of nucleosomes. Nucleosomes wrap and compact DNA into chromatin, limiting DNA accessibility to the cellular machineries which require DNA as a template. Histones thereby play a central role in transcription regulation, DNA repair, DNA replication and chromosomal stability. DNA accessibility is regulated via a complex set of post-translational modifications of histones, also called histone code, and nucleosome remodeling. Required for checkpoint-mediated arrest of cell cycle progression in response to low doses of ionizing radiation and for efficient repair of DNA double strand breaks (DSBs) specifically when modified by C-terminal phosphorylation. The chain is Histone H2AX from Homo sapiens (Human).